The primary structure comprises 132 residues: Small ribosomal subunit protein uS12 (132 aa).

The residue at position 89 (Asp-89) is a 3-methylthioaspartic acid. Residues 106–132 form a disordered region; that stretch reads GVKDRKKSRSKYGTKKPKEAAKTAAKK. Residues 109–120 show a composition bias toward basic residues; the sequence is DRKKSRSKYGTK.

The protein belongs to the universal ribosomal protein uS12 family. Part of the 30S ribosomal subunit. Contacts proteins S8 and S17. May interact with IF1 in the 30S initiation complex.

Its function is as follows. With S4 and S5 plays an important role in translational accuracy. In terms of biological role, interacts with and stabilizes bases of the 16S rRNA that are involved in tRNA selection in the A site and with the mRNA backbone. Located at the interface of the 30S and 50S subunits, it traverses the body of the 30S subunit contacting proteins on the other side and probably holding the rRNA structure together. The combined cluster of proteins S8, S12 and S17 appears to hold together the shoulder and platform of the 30S subunit. The protein is Small ribosomal subunit protein uS12 (rpsL) of Thermus thermophilus (strain ATCC BAA-163 / DSM 7039 / HB27).